Consider the following 154-residue polypeptide: 6,7-dimethyl-8-ribityllumazine synthase (154 aa).

5-amino-6-(D-ribitylamino)uracil-binding positions include Trp22, 56–58 (SHE), and 80–82 (AVI). 85–86 (DT) is a binding site for (2S)-2-hydroxy-3-oxobutyl phosphate. Catalysis depends on His88, which acts as the Proton donor. Phe113 contributes to the 5-amino-6-(D-ribitylamino)uracil binding site. Arg127 serves as a coordination point for (2S)-2-hydroxy-3-oxobutyl phosphate.

It belongs to the DMRL synthase family.

It carries out the reaction (2S)-2-hydroxy-3-oxobutyl phosphate + 5-amino-6-(D-ribitylamino)uracil = 6,7-dimethyl-8-(1-D-ribityl)lumazine + phosphate + 2 H2O + H(+). The protein operates within cofactor biosynthesis; riboflavin biosynthesis; riboflavin from 2-hydroxy-3-oxobutyl phosphate and 5-amino-6-(D-ribitylamino)uracil: step 1/2. Its function is as follows. Catalyzes the formation of 6,7-dimethyl-8-ribityllumazine by condensation of 5-amino-6-(D-ribitylamino)uracil with 3,4-dihydroxy-2-butanone 4-phosphate. This is the penultimate step in the biosynthesis of riboflavin. The sequence is that of 6,7-dimethyl-8-ribityllumazine synthase from Deinococcus geothermalis (strain DSM 11300 / CIP 105573 / AG-3a).